Consider the following 341-residue polypeptide: Methionine import ATP-binding protein MetN (341 aa).

An ABC transporter domain is found at isoleucine 2 to valine 241. Glycine 38–serine 45 contributes to the ATP binding site.

This sequence belongs to the ABC transporter superfamily. Methionine importer (TC 3.A.1.24) family. The complex is composed of two ATP-binding proteins (MetN), two transmembrane proteins (MetI) and a solute-binding protein (MetQ).

It localises to the cell membrane. It catalyses the reaction L-methionine(out) + ATP + H2O = L-methionine(in) + ADP + phosphate + H(+). It carries out the reaction D-methionine(out) + ATP + H2O = D-methionine(in) + ADP + phosphate + H(+). Its function is as follows. Part of the ABC transporter complex MetNIQ involved in methionine import. Responsible for energy coupling to the transport system. This is Methionine import ATP-binding protein MetN from Staphylococcus haemolyticus (strain JCSC1435).